A 70-amino-acid chain; its full sequence is Palustrin-2ISa (70 aa).

The first 22 residues, 1 to 22 (MFTLKKSLLLLFFLGTISLSLC), serve as a signal peptide directing secretion. Positions 23–39 (EQERSAEDEGEVIEEEV) are cleaved as a propeptide — removed in mature form. A disulfide bridge connects residues Cys-64 and Cys-70.

As to expression, expressed by the skin glands.

It is found in the secreted. In terms of biological role, has antimicrobial activity against Gram-negative bacterium E.coli ATCC 8739 (MIC=100 ug), against Gram positive bacteria S.aureus ATCC 6538 (MIC=25 ug), methicillin-resistant S.aureus ATCC 43300 (MIC=100 ug), B.subtilis ATCC 6633 (MIC=12.5 ug) and against fungus C.albicans ATCC 90028 (MIC=100 ug). The polypeptide is Palustrin-2ISa (Odorrana ishikawae (Ishikawa's frog)).